A 269-amino-acid chain; its full sequence is 5'-nucleotidase SurE (269 aa).

A divalent metal cation contacts are provided by D11, D12, S43, and N101.

This sequence belongs to the SurE nucleotidase family. A divalent metal cation serves as cofactor.

The protein resides in the cytoplasm. The catalysed reaction is a ribonucleoside 5'-phosphate + H2O = a ribonucleoside + phosphate. Its function is as follows. Nucleotidase that shows phosphatase activity on nucleoside 5'-monophosphates. The sequence is that of 5'-nucleotidase SurE from Prochlorococcus marinus (strain MIT 9303).